We begin with the raw amino-acid sequence, 300 residues long: Ribosomal protein bS6--L-glutamate ligase (300 aa).

Positions 104 to 287 (MQLLARQGID…IAGKMIRWIE (184 aa)) constitute an ATP-grasp domain. ATP-binding positions include Lys141, 178-179 (EY), Asp187, and 211-213 (RSN). Asp248, Glu260, and Asn262 together coordinate Mg(2+). Mn(2+)-binding residues include Asp248, Glu260, and Asn262.

This sequence belongs to the RimK family. It depends on Mg(2+) as a cofactor. The cofactor is Mn(2+).

In terms of biological role, an L-glutamate ligase that catalyzes the ATP-dependent post-translational addition of glutamate residues to the C-terminus of ribosomal protein bS6 (RpsF). Is also able to catalyze the synthesis of poly-alpha-glutamate in vitro, via ATP hydrolysis from unprotected glutamate as substrate. The number of glutamate residues added to either RpsF or to poly-alpha-glutamate changes with pH. The sequence is that of Ribosomal protein bS6--L-glutamate ligase from Shigella dysenteriae serotype 1 (strain Sd197).